The primary structure comprises 186 residues: Peptidyl-tRNA hydrolase (186 aa).

Tyr-14 contacts tRNA. His-19 (proton acceptor) is an active-site residue. Positions 64, 66, and 112 each coordinate tRNA.

Belongs to the PTH family. In terms of assembly, monomer.

The protein resides in the cytoplasm. The enzyme catalyses an N-acyl-L-alpha-aminoacyl-tRNA + H2O = an N-acyl-L-amino acid + a tRNA + H(+). Its function is as follows. Hydrolyzes ribosome-free peptidyl-tRNAs (with 1 or more amino acids incorporated), which drop off the ribosome during protein synthesis, or as a result of ribosome stalling. Catalyzes the release of premature peptidyl moieties from peptidyl-tRNA molecules trapped in stalled 50S ribosomal subunits, and thus maintains levels of free tRNAs and 50S ribosomes. This chain is Peptidyl-tRNA hydrolase, found in Bacillus cytotoxicus (strain DSM 22905 / CIP 110041 / 391-98 / NVH 391-98).